We begin with the raw amino-acid sequence, 858 residues long: Heat shock protein 105 kDa (858 aa).

Ser2 bears the N-acetylserine mark. An N6-acetyllysine modification is found at Lys471. Disordered regions lie at residues 500 to 584 (KVPT…PPEA) and 796 to 858 (CEPV…MDLD). The span at 504-514 (EENEMSSEADM) shows a compositional bias: acidic residues. 2 positions are modified to phosphoserine: Ser509 and Ser510. Polar residues predominate over residues 532–554 (QQDNSEAGTQPQVQTDAQQTSQS). Ser557 is modified (phosphoserine). Thr561 bears the Phosphothreonine mark. Basic and acidic residues-rich tracts occupy residues 563–584 (EENK…PPEA) and 805–814 (PKIESPKLER). Ser809 carries the post-translational modification Phosphoserine. Thr815 carries the post-translational modification Phosphothreonine. Basic and acidic residues predominate over residues 821–832 (IDKKEEDLEDKN). A compositionally biased stretch (polar residues) spans 849–858 (EKNSVNMDLD).

The protein belongs to the heat shock protein 70 family. In terms of assembly, interacts with HSPA8/HSC70. Interacts with HSPA1A (via NBD) and HSPA1B (via NBD). In terms of processing, phosphorylation on Ser-509 may be important for regulation of the HSPA8/HSC70 chaperone activity. Highly expressed in testis. Present at lower levels in most brain regions, except cerebellum. Overexpressed in cancer cells.

The protein resides in the cytoplasm. In terms of biological role, acts as a nucleotide-exchange factor (NEF) for chaperone proteins HSPA1A and HSPA1B, promoting the release of ADP from HSPA1A/B thereby triggering client/substrate protein release. Prevents the aggregation of denatured proteins in cells under severe stress, on which the ATP levels decrease markedly. Inhibits HSPA8/HSC70 ATPase and chaperone activities. The chain is Heat shock protein 105 kDa (HSPH1) from Homo sapiens (Human).